The following is a 197-amino-acid chain: Nascent polypeptide-associated complex subunit alpha (197 aa).

Residues 1-18 show a composition bias toward basic and acidic residues; the sequence is MTGSTETRHNEKDVKEPQ. Residues 1-30 form a disordered region; sequence MTGSTETRHNEKDVKEPQVDSDADSDNEAI. Over residues 19–28 the composition is skewed to acidic residues; the sequence is VDSDADSDNE. The 66-residue stretch at 58-123 folds into the NAC-A/B domain; that stretch reads SRSEKKARKL…AKIEDLTQHA (66 aa). The disordered stretch occupies residues 134 to 155; that stretch reads TREAPQLKTVEEDDNEDVEEDS. Residues 144-155 are compositionally biased toward acidic residues; it reads EEDDNEDVEEDS. Residues 158-195 enclose the UBA domain; that stretch reads IEEKDIELVISQANTTRNKAIRALKDADNDIVNAIMSL.

It belongs to the NAC-alpha family.

Functionally, may promote appropriate targeting of ribosome-nascent polypeptide complexes. This chain is Nascent polypeptide-associated complex subunit alpha, found in Caenorhabditis briggsae.